Reading from the N-terminus, the 146-residue chain is Deoxyuridine 5'-triphosphate nucleotidohydrolase (146 aa).

Substrate contacts are provided by residues 66–68 (RSG), Asn-79, 83–85 (TVD), and Lys-93.

Belongs to the dUTPase family. Mg(2+) serves as cofactor.

The catalysed reaction is dUTP + H2O = dUMP + diphosphate + H(+). The protein operates within pyrimidine metabolism; dUMP biosynthesis; dUMP from dCTP (dUTP route): step 2/2. This enzyme is involved in nucleotide metabolism: it produces dUMP, the immediate precursor of thymidine nucleotides and it decreases the intracellular concentration of dUTP so that uracil cannot be incorporated into DNA. The chain is Deoxyuridine 5'-triphosphate nucleotidohydrolase from Fusobacterium nucleatum subsp. nucleatum (strain ATCC 25586 / DSM 15643 / BCRC 10681 / CIP 101130 / JCM 8532 / KCTC 2640 / LMG 13131 / VPI 4355).